The sequence spans 272 residues: MTLQEQIMKALHVQPVIDPKVEIRKRVDFLKDYVKKTGAKGFVLGISGGQDSTLAGRLAQLAVEEIRNEGGNATFIAVRLPYKVQKDEDDAQLALQFIQADQSTAFDIASTVDAFSNQYENLLGESLTDFNKGNVKARIRMVTQYAIGGQKGLLVIGTDHAAEAVTGFFTKFGDGGADLLPLTGLTKRQGRALLQELGADERLYLKMPTADLLDEKPGQADETELGITYDQLDDYLEGKAVPADVAEKIEKRYTVSEHKRQVPASMFDDWWK.

45 to 52 (GISGGQDS) provides a ligand contact to ATP. Aspartate 51 is a binding site for Mg(2+). Arginine 138 is a deamido-NAD(+) binding site. Residue threonine 158 participates in ATP binding. Mg(2+) is bound at residue glutamate 163. 2 residues coordinate deamido-NAD(+): lysine 171 and aspartate 178. Residues lysine 187 and threonine 209 each contribute to the ATP site. Residue 258-259 (HK) coordinates deamido-NAD(+).

The protein belongs to the NAD synthetase family. As to quaternary structure, homodimer.

The enzyme catalyses deamido-NAD(+) + NH4(+) + ATP = AMP + diphosphate + NAD(+) + H(+). The protein operates within cofactor biosynthesis; NAD(+) biosynthesis; NAD(+) from deamido-NAD(+) (ammonia route): step 1/1. Functionally, catalyzes the ATP-dependent amidation of deamido-NAD to form NAD. Uses ammonia as a nitrogen source. The sequence is that of NH(3)-dependent NAD(+) synthetase from Bacillus cereus (strain G9842).